Here is a 244-residue protein sequence, read N- to C-terminus: 1-(5-phosphoribosyl)-5-[(5-phosphoribosylamino)methylideneamino] imidazole-4-carboxamide isomerase (244 aa).

The Proton acceptor role is filled by Asp-8. The Proton donor role is filled by Asp-129.

The protein belongs to the HisA/HisF family.

The protein resides in the cytoplasm. It carries out the reaction 1-(5-phospho-beta-D-ribosyl)-5-[(5-phospho-beta-D-ribosylamino)methylideneamino]imidazole-4-carboxamide = 5-[(5-phospho-1-deoxy-D-ribulos-1-ylimino)methylamino]-1-(5-phospho-beta-D-ribosyl)imidazole-4-carboxamide. Its pathway is amino-acid biosynthesis; L-histidine biosynthesis; L-histidine from 5-phospho-alpha-D-ribose 1-diphosphate: step 4/9. The sequence is that of 1-(5-phosphoribosyl)-5-[(5-phosphoribosylamino)methylideneamino] imidazole-4-carboxamide isomerase from Allorhizobium ampelinum (strain ATCC BAA-846 / DSM 112012 / S4) (Agrobacterium vitis (strain S4)).